The following is a 542-amino-acid chain: Chondroitin sulfate N-acetylgalactosaminyltransferase 2 (542 aa).

The Cytoplasmic segment spans residues 1-11; that stretch reads MPRRGLILHTR. Residues 12 to 32 form a helical; Signal-anchor for type II membrane protein membrane-spanning segment; that stretch reads THWLLLGLALLCSLVLFMYLL. At 33 to 542 the chain is on the lumenal side; it reads ECAPQTDGNA…AYRTNSEAVG (510 aa). N-linked (GlcNAc...) asparagine glycosylation occurs at Asn41. Residues 59–105 are a coiled coil; the sequence is ALLQEQEEHYQTRATSLKRQIAQLKQELQEMSEKMRSLQERRNVGAN. The N-linked (GlcNAc...) asparagine glycan is linked to Asn333. Positions 369 and 486 each coordinate a divalent metal cation.

This sequence belongs to the chondroitin N-acetylgalactosaminyltransferase family. Ubiquitous.

Its subcellular location is the golgi apparatus. The protein localises to the golgi stack membrane. The catalysed reaction is 3-O-(beta-D-GlcA-(1-&gt;3)-beta-D-Gal-(1-&gt;3)-beta-D-Gal-(1-&gt;4)-beta-D-Xyl)-L-seryl-[protein] + UDP-N-acetyl-alpha-D-galactosamine = 3-O-(beta-D-GalNAc-(1-&gt;4)-beta-D-GlcA-(1-&gt;3)-beta-D-Gal-(1-&gt;3)-beta-D-Gal-(1-&gt;4)-beta-D-Xyl)-L-seryl-[protein] + UDP + H(+). Its function is as follows. Transfers 1,4-N-acetylgalactosamine (GalNAc) from UDP-GalNAc to the non-reducing end of glucuronic acid (GlcUA). Required for addition of the first GalNAc to the core tetrasaccharide linker and for elongation of chondroitin chains. The polypeptide is Chondroitin sulfate N-acetylgalactosaminyltransferase 2 (CSGALNACT2) (Homo sapiens (Human)).